The primary structure comprises 264 residues: Teichoic acids export ATP-binding protein TagH (264 aa).

The ABC transporter domain maps to 22-243 (ERLKDVIVPF…YEKFLNDFKK (222 aa)). 57–64 (GINGSGKS) lines the ATP pocket.

This sequence belongs to the ABC transporter superfamily. Teichoic acids exporter (TC 3.A.1.104.1) family. As to quaternary structure, the complex is composed of two ATP-binding proteins (TagH) and two transmembrane proteins (TagG).

The protein resides in the cell membrane. The catalysed reaction is ATP + H2O + teichoic acidSide 1 = ADP + phosphate + teichoic acidSide 2.. Its function is as follows. Part of the ABC transporter complex TagGH involved in teichoic acids export. Responsible for energy coupling to the transport system. This Staphylococcus saprophyticus subsp. saprophyticus (strain ATCC 15305 / DSM 20229 / NCIMB 8711 / NCTC 7292 / S-41) protein is Teichoic acids export ATP-binding protein TagH.